The primary structure comprises 91 residues: Acylphosphatase (91 aa).

The region spanning 3-91 (CLRAIVKGKV…ANYSDFRIKH (89 aa)) is the Acylphosphatase-like domain. Residues Arg-18 and Asn-36 contribute to the active site.

The protein belongs to the acylphosphatase family.

It carries out the reaction an acyl phosphate + H2O = a carboxylate + phosphate + H(+). This chain is Acylphosphatase (acyP), found in Dehalococcoides mccartyi (strain CBDB1).